The sequence spans 430 residues: Dynactin subunit 2 (430 aa).

Disordered stretches follow at residues 1–51 and 201–228; these read MSEG…IDRS and SLSS…SSSS. Polar residues predominate over residues 32 to 44; the sequence is SISNLADESSELV. 2 coiled-coil regions span residues 241 to 319 and 397 to 430; these read TGEQ…QDET and DDSF…QQQQ.

This sequence belongs to the dynactin subunit 2 family. As to quaternary structure, subunit of dynactin, a multiprotein complex associated with dynein.

It localises to the cytoplasm. It is found in the cytoskeleton. The protein localises to the membrane. Functionally, modulates cytoplasmic dynein binding to an organelle, and plays a role in prometaphase chromosome alignment and spindle organization during mitosis. The chain is Dynactin subunit 2 (dynB) from Dictyostelium discoideum (Social amoeba).